A 219-amino-acid polypeptide reads, in one-letter code: Probable cutinase 4 (219 aa).

An N-terminal signal peptide occupies residues methionine 1–alanine 17. Intrachain disulfides connect cysteine 41-cysteine 120 and cysteine 67-cysteine 81. An N-linked (GlcNAc...) asparagine glycan is attached at asparagine 99. Serine 131 (nucleophile) is an active-site residue. A disulfide bond links cysteine 182 and cysteine 189. Aspartate 186 is an active-site residue. Catalysis depends on histidine 199, which acts as the Proton donor/acceptor.

It belongs to the cutinase family.

The protein resides in the secreted. The enzyme catalyses cutin + H2O = cutin monomers.. Its function is as follows. Catalyzes the hydrolysis of complex carboxylic polyesters found in the cell wall of plants. Degrades cutin, a macromolecule that forms the structure of the plant cuticle. The chain is Probable cutinase 4 from Aspergillus terreus (strain NIH 2624 / FGSC A1156).